The sequence spans 482 residues: Carbamoyl phosphate synthase large chain, N-terminal section (482 aa).

A carboxyphosphate synthetic domain region spans residues 1–398 (MESIKKVMVF…ALQKAIRSLD (398 aa)). Residues Arg126, Arg166, Gly172, Gly173, Glu205, Val207, Glu212, Gly238, Ile239, His240, Gln281, and Glu295 each contribute to the ATP site. Positions 130–324 (AEAMAEINEP…IARIAAKIAI (195 aa)) constitute an ATP-grasp domain. Mg(2+) contacts are provided by Gln281, Glu295, and Asn297. Mn(2+)-binding residues include Gln281, Glu295, and Asn297.

The protein belongs to the CarB family. Composed of two chains; the small (or glutamine) chain promotes the hydrolysis of glutamine to ammonia, which is used by the large (or ammonia) chain to synthesize carbamoyl phosphate. Tetramer of heterodimers (alpha,beta)4. Mg(2+) is required as a cofactor. It depends on Mn(2+) as a cofactor.

It carries out the reaction hydrogencarbonate + L-glutamine + 2 ATP + H2O = carbamoyl phosphate + L-glutamate + 2 ADP + phosphate + 2 H(+). The enzyme catalyses hydrogencarbonate + NH4(+) + 2 ATP = carbamoyl phosphate + 2 ADP + phosphate + 2 H(+). It functions in the pathway amino-acid biosynthesis; L-arginine biosynthesis; carbamoyl phosphate from bicarbonate: step 1/1. It participates in pyrimidine metabolism; UMP biosynthesis via de novo pathway; (S)-dihydroorotate from bicarbonate: step 1/3. Functionally, large subunit of the glutamine-dependent carbamoyl phosphate synthetase (CPSase). CPSase catalyzes the formation of carbamoyl phosphate from the ammonia moiety of glutamine, carbonate, and phosphate donated by ATP, constituting the first step of 2 biosynthetic pathways, one leading to arginine and/or urea and the other to pyrimidine nucleotides. The large subunit (synthetase) binds the substrates ammonia (free or transferred from glutamine from the small subunit), hydrogencarbonate and ATP and carries out an ATP-coupled ligase reaction, activating hydrogencarbonate by forming carboxy phosphate which reacts with ammonia to form carbamoyl phosphate. The protein is Carbamoyl phosphate synthase large chain, N-terminal section (carB1) of Methanocaldococcus jannaschii (strain ATCC 43067 / DSM 2661 / JAL-1 / JCM 10045 / NBRC 100440) (Methanococcus jannaschii).